Consider the following 670-residue polypeptide: Probable urocanate hydratase (670 aa).

Residues 126–127 (GG), glutamine 204, 250–252 (GMS), glutamate 270, 316–317 (NV), 338–342 (QTSLH), 349–350 (FY), tyrosine 398, and glycine 590 each bind NAD(+).

It belongs to the urocanase family. NAD(+) is required as a cofactor.

The catalysed reaction is 4-imidazolone-5-propanoate = trans-urocanate + H2O. Its pathway is amino-acid degradation; L-histidine degradation into L-glutamate; N-formimidoyl-L-glutamate from L-histidine: step 2/3. The sequence is that of Probable urocanate hydratase from Caenorhabditis elegans.